The following is an 84-amino-acid chain: MVKLRLKRYGRKKRPFYRVIAIDSRCRRDGKALKELGFYDPIAGKTQLDVPNIIFYLKAGAQTSETVGNLLQKAKVFNQLSLLN.

This sequence belongs to the bacterial ribosomal protein bS16 family.

Its subcellular location is the plastid. It localises to the chloroplast. This chain is Small ribosomal subunit protein bS16c, found in Mesostigma viride (Green alga).